The primary structure comprises 348 residues: Phosphatidylglycerophosphate phosphatase 1, chloroplastic/mitochondrial (348 aa).

The N-terminal 58 residues, 1 to 58, are a transit peptide targeting the chloroplast and mitochondrion; that stretch reads MQTPSMAASTTSYYPIPKSFLLSPPRHKRNPNLISCSTKPICSPPPPSSSSSSPLQTT. The interval 17–67 is disordered; that stretch reads PKSFLLSPPRHKRNPNLISCSTKPICSPPPPSSSSSSPLQTTTTHRSQKQN. Polar residues predominate over residues 55-67; that stretch reads LQTTTTHRSQKQN. A Phosphoryl acceptor motif is present at residues 184 to 188; that stretch reads DKDNT.

The protein belongs to the HAD-like hydrolase superfamily. Requires Mg(2+) as cofactor. Mainly expressed in inflorescences (especially in pollen) and, to a lower extent, in leaves, stems and siliques, as well as, at low levels, in roots. Mostly expressed in hypocotyl, vasculatures, trichomes, guard cells and stigmas.

Its subcellular location is the plastid. It is found in the chloroplast. The protein localises to the mitochondrion. It carries out the reaction a 1,2-diacyl-sn-glycero-3-phospho-(1'-sn-glycero-3'-phosphate) + H2O = a 1,2-diacyl-sn-glycero-3-phospho-(1'-sn-glycerol) + phosphate. It participates in phospholipid metabolism; phosphatidylglycerol biosynthesis; phosphatidylglycerol from CDP-diacylglycerol: step 2/2. Phosphatidylglycerophosphate (PGP) phosphatase involved in the biosynthesis of phosphatidylglycerol (PG), a phosphoglycerolipid predominantly present in chloroplastic thylakoid membranes and which has important photosynthetic function; seems to use PGP 34:3, PGP 34:2 and PGP 34:1 as substrates. Required for thylakoid membranes development and chloroplast function. Necessary for normal cell growth. Required for root growth and columella cells organization. This is Phosphatidylglycerophosphate phosphatase 1, chloroplastic/mitochondrial from Arabidopsis thaliana (Mouse-ear cress).